The sequence spans 904 residues: Alpha-actinin-4 (904 aa).

Residues 1 to 27 form a disordered region; that stretch reads MVDYHSAGQPYPYGGNGPGPNGDYMAQ. The segment at 1-259 is actin-binding; sequence MVDYHSAGQP…IMTYVSSFYH (259 aa). Calponin-homology (CH) domains are found at residues 43–147 and 156–262; these read KQQR…LRFA and TSAK…HAFS. 4 Spectrin repeats span residues 286–396, 406–511, 521–632, and 642–745; these read HLME…WLLN, HLAE…ALEK, ELHL…ALQD, and RLRR…EVEN. EF-hand domains follow at residues 758–793 and 799–834; these read EQMQ…LGYD and QGDA…ETTD. Ca(2+)-binding residues include Asp-771, Asp-773, Glu-782, Asp-812, Asn-814, Ser-816, and Ser-818.

It belongs to the alpha-actinin family. In terms of assembly, homodimer; antiparallel. Component of the CART complex. May interact with nuclear receptors.

It localises to the nucleus. It is found in the cytoplasm. The protein resides in the cell junction. The protein localises to the perinuclear region. Its function is as follows. F-actin cross-linking protein which is thought to anchor actin to a variety of intracellular structures. This is a bundling protein. Probably involved in vesicular trafficking via its association with the CART complex. Involved in tight junction assembly in epithelial cells. May also function as a transcriptional coactivator, stimulating transcription mediated by nuclear hormone receptors. This is Alpha-actinin-4 from Gallus gallus (Chicken).